The sequence spans 24 residues: Fibrinogen gamma chain (24 aa).

In terms of assembly, heterohexamer; disulfide linked. Contains 2 sets of 3 non-identical chains (alpha, beta and gamma). The 2 heterotrimers are in head to head conformation with the N-termini in a small central domain. Conversion of fibrinogen to fibrin is triggered by thrombin, which cleaves fibrinopeptides A and B from alpha and beta chains, and thus exposes the N-terminal polymerization sites responsible for the formation of the soft clot. The soft clot is converted into the hard clot by factor XIIIA which catalyzes the epsilon-(gamma-glutamyl)lysine cross-linking between gamma chains (stronger) and between alpha chains (weaker) of different monomers.

The protein localises to the secreted. Its function is as follows. Together with fibrinogen alpha (FGA) and fibrinogen beta (FGB), polymerizes to form an insoluble fibrin matrix. Has a major function in hemostasis as one of the primary components of blood clots. In addition, functions during the early stages of wound repair to stabilize the lesion and guide cell migration during re-epithelialization. Was originally thought to be essential for platelet aggregation, based on in vitro studies using anticoagulated blood. However, subsequent studies have shown that it is not absolutely required for thrombus formation in vivo. Enhances expression of SELP in activated platelets via an ITGB3-dependent pathway. Maternal fibrinogen is essential for successful pregnancy. Fibrin deposition is also associated with infection, where it protects against IFNG-mediated hemorrhage. May also facilitate the antibacterial immune response via both innate and T-cell mediated pathways. The protein is Fibrinogen gamma chain (FGG) of Canis lupus familiaris (Dog).